Reading from the N-terminus, the 603-residue chain is Elongation factor 4 (603 aa).

Residues 7–189 form the tr-type G domain; that stretch reads SRIRNFSIIA…SIVHLVPPPE (183 aa). GTP-binding positions include 19-24 and 136-139; these read DHGKST and NKID.

This sequence belongs to the TRAFAC class translation factor GTPase superfamily. Classic translation factor GTPase family. LepA subfamily.

It localises to the cell inner membrane. The enzyme catalyses GTP + H2O = GDP + phosphate + H(+). In terms of biological role, required for accurate and efficient protein synthesis under certain stress conditions. May act as a fidelity factor of the translation reaction, by catalyzing a one-codon backward translocation of tRNAs on improperly translocated ribosomes. Back-translocation proceeds from a post-translocation (POST) complex to a pre-translocation (PRE) complex, thus giving elongation factor G a second chance to translocate the tRNAs correctly. Binds to ribosomes in a GTP-dependent manner. The protein is Elongation factor 4 of Acaryochloris marina (strain MBIC 11017).